A 410-amino-acid chain; its full sequence is Cytochrome P450 CYP107DY1 (410 aa).

Heme-binding residues include H106 and R110. Positions 249 and 253 each coordinate substrate. R302, H358, and C360 together coordinate heme.

It belongs to the cytochrome P450 family. The cofactor is heme.

The enzyme catalyses mevastatin + 2 reduced [2Fe-2S]-[ferredoxin] + O2 + 2 H(+) = pravastatin lactone + 2 oxidized [2Fe-2S]-[ferredoxin] + H2O. In terms of biological role, cytochrome P450 whose physiological substrate is unknown. In vitro, is able to catalyze the selective hydroxylation of mevastatin to pravastatin, the widely used therapeutic agent for hypercholesterolemia. In Priestia megaterium (strain ATCC 12872 / QMB1551) (Bacillus megaterium), this protein is Cytochrome P450 CYP107DY1.